We begin with the raw amino-acid sequence, 229 residues long: Potassium/proton antiporter CemA (229 aa).

3 helical membrane-spanning segments follow: residues 7–27, 114–134, and 189–209; these read FTPL…SFSF, LICF…LVIL, and ILSG…KYWI.

The protein belongs to the CemA family.

It is found in the plastid. Its subcellular location is the chloroplast inner membrane. The enzyme catalyses K(+)(in) + H(+)(out) = K(+)(out) + H(+)(in). Its function is as follows. Contributes to K(+)/H(+) antiport activity by supporting proton efflux to control proton extrusion and homeostasis in chloroplasts in a light-dependent manner to modulate photosynthesis. Prevents excessive induction of non-photochemical quenching (NPQ) under continuous-light conditions. Indirectly promotes efficient inorganic carbon uptake into chloroplasts. The polypeptide is Potassium/proton antiporter CemA (Ipomoea purpurea (Common morning glory)).